The following is a 115-amino-acid chain: Large ribosomal subunit protein bL20c (115 aa).

It belongs to the bacterial ribosomal protein bL20 family.

The protein localises to the plastid. It is found in the chloroplast. Binds directly to 23S ribosomal RNA and is necessary for the in vitro assembly process of the 50S ribosomal subunit. It is not involved in the protein synthesizing functions of that subunit. The chain is Large ribosomal subunit protein bL20c from Chaetosphaeridium globosum (Charophycean green alga).